We begin with the raw amino-acid sequence, 126 residues long: Fluoride-specific ion channel FluC (126 aa).

Helical transmembrane passes span 5–25 (FILAVAAGGALGSVARYLVGI), 39–59 (TLFINVTGSLLIGIFAGLFAV), 69–89 (IFLVVGICGGYTTFSTFSLDT), and 103–123 (AYMIGSVVLSVGALIAGIQIV). Positions 77 and 80 each coordinate Na(+).

It belongs to the fluoride channel Fluc/FEX (TC 1.A.43) family.

Its subcellular location is the cell inner membrane. It catalyses the reaction fluoride(in) = fluoride(out). With respect to regulation, na(+) is not transported, but it plays an essential structural role and its presence is essential for fluoride channel function. In terms of biological role, fluoride-specific ion channel. Important for reducing fluoride concentration in the cell, thus reducing its toxicity. This chain is Fluoride-specific ion channel FluC, found in Nitrobacter winogradskyi (strain ATCC 25391 / DSM 10237 / CIP 104748 / NCIMB 11846 / Nb-255).